The chain runs to 486 residues: Vacuolar protein sorting-associated protein 73 (486 aa).

The Cytoplasmic segment spans residues 1 to 26; that stretch reads MNRILSSASLLSNVSMPRQNKHKITK. A helical membrane pass occupies residues 27–47; that stretch reads ALCYAIIVASIGSIQFGYHLS. Topologically, residues 48 to 90 are mitochondrial intermembrane; it reads ELNAPQQVLSCSEFDIPMEGYPYDRTWLGKRGYKQCIPLNDEQ. The chain crosses the membrane as a helical span at residues 91–111; sequence IGIVTSVFCIGGILGSYFATS. The Cytoplasmic portion of the chain corresponds to 112 to 119; it reads LANIYGRK. Residues 120–140 form a helical membrane-spanning segment; it reads FSSLINCTLNIVGSLIIFNSN. Residues 141–146 lie on the Mitochondrial intermembrane side of the membrane; that stretch reads SYRGLI. A helical membrane pass occupies residues 147 to 167; it reads IGRILVGISCGSLIVIIPLFI. Residues 168–178 are Cytoplasmic-facing; the sequence is KEVAPSGWEGL. Residues 179 to 199 form a helical membrane-spanning segment; it reads LGSMTQICIRLGVLLTQGIAL. Over 200 to 208 the chain is Mitochondrial intermembrane; sequence PLTDSYRWR. The helical transmembrane segment at 209–229 threads the bilayer; it reads WILFGSFLIAVLNFFMWFIVD. The Cytoplasmic portion of the chain corresponds to 230–305; that stretch reads ESPKWLLAHG…RDRTNVKSRH (76 aa). Residues 306-326 traverse the membrane as a helical segment; that stretch reads VITVLLFGQQFCGINSIVLYG. At 327–342 the chain is on the mitochondrial intermembrane side; that stretch reads TKIISQLYPQHAIRIN. A helical membrane pass occupies residues 343 to 363; sequence FFISMVNVLVTILVSLLIHSL. The Cytoplasmic portion of the chain corresponds to 364–366; that stretch reads PRK. Residues 367–387 form a helical membrane-spanning segment; the sequence is PLLMTSTVLVSVTAFIMGIAM. The Mitochondrial intermembrane segment spans residues 388–396; that stretch reads NHNKMNLLI. The chain crosses the membrane as a helical span at residues 397 to 417; it reads VFSFIYMGVFTMGLNPLPFII. The Cytoplasmic segment spans residues 418–432; sequence MREVSKPQDMVLAQR. The chain crosses the membrane as a helical span at residues 433–453; sequence YGTICNWVGTFIIAYTFPIIH. Position 454 (Asp-454) is a topological domain, mitochondrial intermembrane. Residues 455–475 form a helical membrane-spanning segment; the sequence is VLSGYVFIIFAIIACSISAFI. The Cytoplasmic segment spans residues 476–486; it reads WKKVPETKRSG.

Belongs to the major facilitator superfamily. Sugar transporter (TC 2.A.1.1) family.

It is found in the mitochondrion membrane. In terms of biological role, may be involved in vacuolar protein sorting. The sequence is that of Vacuolar protein sorting-associated protein 73 (VPS73) from Saccharomyces cerevisiae (strain ATCC 204508 / S288c) (Baker's yeast).